A 323-amino-acid chain; its full sequence is Ribosomal RNA small subunit methyltransferase H (323 aa).

S-adenosyl-L-methionine is bound by residues 39–41 (GGY), aspartate 57, phenylalanine 84, aspartate 103, and glutamine 110.

This sequence belongs to the methyltransferase superfamily. RsmH family.

Its subcellular location is the cytoplasm. It carries out the reaction cytidine(1402) in 16S rRNA + S-adenosyl-L-methionine = N(4)-methylcytidine(1402) in 16S rRNA + S-adenosyl-L-homocysteine + H(+). In terms of biological role, specifically methylates the N4 position of cytidine in position 1402 (C1402) of 16S rRNA. The sequence is that of Ribosomal RNA small subunit methyltransferase H from Gluconobacter oxydans (strain 621H) (Gluconobacter suboxydans).